Reading from the N-terminus, the 324-residue chain is Alkanal monooxygenase beta chain (324 aa).

It belongs to the bacterial luciferase oxidoreductase family. In terms of assembly, heterodimer of an alpha and a beta chain.

The catalysed reaction is a long-chain fatty aldehyde + FMNH2 + O2 = a long-chain fatty acid + hnu + FMN + H2O + 2 H(+). In terms of biological role, light-emitting reaction in luminous bacteria. The specific role of the beta subunit is unknown, but it is absolutely required for bioluminescence activity. The sequence is that of Alkanal monooxygenase beta chain (luxB) from Photorhabdus laumondii subsp. laumondii (strain DSM 15139 / CIP 105565 / TT01) (Photorhabdus luminescens subsp. laumondii).